Here is a 176-residue protein sequence, read N- to C-terminus: Calponin-1 (176 aa).

One can recognise a Calponin-homology (CH) domain in the interval 22–125 (PQTERQLRVW…STLIALASQA (104 aa)). The stretch at 158-176 (IGLQMGTNKFASQQGMTAY) is one Calponin-like repeat. The residue at position 164 (threonine 164) is a Phosphothreonine; by ROCK2. Phosphoserine; by ROCK2 is present on serine 169. Phosphothreonine; by ROCK2 is present on threonine 174.

Belongs to the calponin family. In terms of tissue distribution, smooth muscle, and tissues containing significant amounts of smooth muscle.

Functionally, thin filament-associated protein that is implicated in the regulation and modulation of smooth muscle contraction. It is capable of binding to actin, calmodulin and tropomyosin. The interaction of calponin with actin inhibits the actomyosin Mg-ATPase activity. This is Calponin-1 (CNN1) from Meleagris gallopavo (Wild turkey).